A 501-amino-acid polypeptide reads, in one-letter code: Pyruvate kinase (501 aa).

Residue Arg-50 participates in substrate binding. Positions 52, 54, 85, and 86 each coordinate K(+). 52–55 (NFSH) is a binding site for ATP. Positions 92 and 178 each coordinate ATP. Position 243 (Glu-243) interacts with Mg(2+). 3 residues coordinate substrate: Gly-266, Asp-267, and Thr-299. Asp-267 contributes to the Mg(2+) binding site.

It belongs to the pyruvate kinase family. In terms of assembly, homotetramer. Mg(2+) is required as a cofactor. K(+) serves as cofactor.

The catalysed reaction is pyruvate + ATP = phosphoenolpyruvate + ADP + H(+). Its pathway is carbohydrate degradation; glycolysis; pyruvate from D-glyceraldehyde 3-phosphate: step 5/5. In Kluyveromyces lactis (strain ATCC 8585 / CBS 2359 / DSM 70799 / NBRC 1267 / NRRL Y-1140 / WM37) (Yeast), this protein is Pyruvate kinase (PYK1).